The sequence spans 206 residues: Ribosomal RNA large subunit methyltransferase E (206 aa).

Residues glycine 54, tryptophan 56, aspartate 76, aspartate 94, and aspartate 118 each contribute to the S-adenosyl-L-methionine site. Lysine 158 functions as the Proton acceptor in the catalytic mechanism.

The protein belongs to the class I-like SAM-binding methyltransferase superfamily. RNA methyltransferase RlmE family.

The protein localises to the cytoplasm. The catalysed reaction is uridine(2552) in 23S rRNA + S-adenosyl-L-methionine = 2'-O-methyluridine(2552) in 23S rRNA + S-adenosyl-L-homocysteine + H(+). Its function is as follows. Specifically methylates the uridine in position 2552 of 23S rRNA at the 2'-O position of the ribose in the fully assembled 50S ribosomal subunit. The protein is Ribosomal RNA large subunit methyltransferase E of Methanosphaera stadtmanae (strain ATCC 43021 / DSM 3091 / JCM 11832 / MCB-3).